Reading from the N-terminus, the 576-residue chain is CTP synthase (576 aa).

The region spanning 305-559 (QIALVGKYTH…LGLVAAAANI (255 aa)) is the Glutamine amidotransferase type-1 domain. Residues C404, H535, and E537 each act as for GATase activity in the active site.

The protein belongs to the CTP synthase family.

The catalysed reaction is UTP + L-glutamine + ATP + H2O = CTP + L-glutamate + ADP + phosphate + 2 H(+). Its pathway is pyrimidine metabolism; CTP biosynthesis via de novo pathway; CTP from UDP: step 2/2. Catalyzes the ATP-dependent amination of UTP to CTP with either L-glutamine or ammonia as the source of nitrogen. This chain is CTP synthase (URA7), found in Eremothecium gossypii (strain ATCC 10895 / CBS 109.51 / FGSC 9923 / NRRL Y-1056) (Yeast).